The chain runs to 525 residues: GMP synthase [glutamine-hydrolyzing] (525 aa).

The Glutamine amidotransferase type-1 domain maps to 9–202 (SILIIDFGSQ…VHKIVGLKSD (194 aa)). The Nucleophile role is filled by C86. Active-site residues include H176 and E178. One can recognise a GMPS ATP-PPase domain in the interval 203-400 (WTMAAYRAEM…LGLPESFIGR (198 aa)). 230-236 (SGGVDSS) provides a ligand contact to ATP.

As to quaternary structure, homodimer.

It carries out the reaction XMP + L-glutamine + ATP + H2O = GMP + L-glutamate + AMP + diphosphate + 2 H(+). It participates in purine metabolism; GMP biosynthesis; GMP from XMP (L-Gln route): step 1/1. Catalyzes the synthesis of GMP from XMP. The chain is GMP synthase [glutamine-hydrolyzing] from Agrobacterium fabrum (strain C58 / ATCC 33970) (Agrobacterium tumefaciens (strain C58)).